The chain runs to 191 residues: MKQLFLIIGAPGSGKTTDAELIAKNNSETIAHFSTGDLLRAESAKKTERGLLIEKFTSQGELVPLEIVVETILSAIKSSSKGIILIDGYPRSVEQMQALDKELNAQNEVVLKSVIEVKVSENTAKERVLGRSRGADDNERVFHNRMRVFLDPLAEIQNFYKNKNVYKAINGERSIEEIVNEMQKYILSFAN.

12–17 (GSGKTT) contacts ATP. The segment at 34-63 (STGDLLRAESAKKTERGLLIEKFTSQGELV) is NMP. Residues Thr35, Arg40, 61–63 (ELV), 88–91 (GYPR), and Gln95 each bind AMP. The LID stretch occupies residues 130–136 (GRSRGAD). Residue Arg131 participates in ATP binding. AMP is bound by residues Arg133 and Arg145. Position 173 (Arg173) interacts with ATP.

The protein belongs to the adenylate kinase family. As to quaternary structure, monomer.

It is found in the cytoplasm. The enzyme catalyses AMP + ATP = 2 ADP. It participates in purine metabolism; AMP biosynthesis via salvage pathway; AMP from ADP: step 1/1. In terms of biological role, catalyzes the reversible transfer of the terminal phosphate group between ATP and AMP. Plays an important role in cellular energy homeostasis and in adenine nucleotide metabolism. The sequence is that of Adenylate kinase from Helicobacter pylori (strain G27).